We begin with the raw amino-acid sequence, 1269 residues long: DNA-directed RNA polymerase subunit beta (1269 aa).

The protein belongs to the RNA polymerase beta chain family. The RNAP catalytic core consists of 2 alpha, 1 beta, 1 beta' and 1 omega subunit. When a sigma factor is associated with the core the holoenzyme is formed, which can initiate transcription.

The catalysed reaction is RNA(n) + a ribonucleoside 5'-triphosphate = RNA(n+1) + diphosphate. DNA-dependent RNA polymerase catalyzes the transcription of DNA into RNA using the four ribonucleoside triphosphates as substrates. The chain is DNA-directed RNA polymerase subunit beta from Porphyromonas gingivalis (strain ATCC 33277 / DSM 20709 / CIP 103683 / JCM 12257 / NCTC 11834 / 2561).